A 332-amino-acid polypeptide reads, in one-letter code: 2,3-diketo-L-gulonate reductase (332 aa).

H44 (proton donor) is an active-site residue. NAD(+) contacts are provided by residues 168 to 174 (ITMVDMS), 224 to 225 (WK), and 304 to 306 (GHE).

It belongs to the LDH2/MDH2 oxidoreductase family. DlgD subfamily. In terms of assembly, homodimer.

The protein localises to the cytoplasm. It catalyses the reaction 3-dehydro-L-gulonate + NAD(+) = 2,3-dioxo-L-gulonate + NADH + H(+). It carries out the reaction 3-dehydro-L-gulonate + NADP(+) = 2,3-dioxo-L-gulonate + NADPH + H(+). Functionally, catalyzes the reduction of 2,3-diketo-L-gulonate in the presence of NADH, to form 3-keto-L-gulonate. The chain is 2,3-diketo-L-gulonate reductase from Haemophilus influenzae (strain ATCC 51907 / DSM 11121 / KW20 / Rd).